We begin with the raw amino-acid sequence, 152 residues long: Large-conductance mechanosensitive channel (152 aa).

Helical transmembrane passes span 21–41 (IDLA…DSLV), 44–64 (VVMP…NKFL), and 92–112 (GNFI…FWMV).

The protein belongs to the MscL family. As to quaternary structure, homopentamer.

The protein resides in the cell inner membrane. Its function is as follows. Channel that opens in response to stretch forces in the membrane lipid bilayer. May participate in the regulation of osmotic pressure changes within the cell. The polypeptide is Large-conductance mechanosensitive channel (Bordetella bronchiseptica (strain ATCC BAA-588 / NCTC 13252 / RB50) (Alcaligenes bronchisepticus)).